A 582-amino-acid chain; its full sequence is Proline--tRNA ligase (582 aa).

It belongs to the class-II aminoacyl-tRNA synthetase family. ProS type 1 subfamily. In terms of assembly, homodimer.

The protein resides in the cytoplasm. It carries out the reaction tRNA(Pro) + L-proline + ATP = L-prolyl-tRNA(Pro) + AMP + diphosphate. In terms of biological role, catalyzes the attachment of proline to tRNA(Pro) in a two-step reaction: proline is first activated by ATP to form Pro-AMP and then transferred to the acceptor end of tRNA(Pro). As ProRS can inadvertently accommodate and process non-cognate amino acids such as alanine and cysteine, to avoid such errors it has two additional distinct editing activities against alanine. One activity is designated as 'pretransfer' editing and involves the tRNA(Pro)-independent hydrolysis of activated Ala-AMP. The other activity is designated 'posttransfer' editing and involves deacylation of mischarged Ala-tRNA(Pro). The misacylated Cys-tRNA(Pro) is not edited by ProRS. The polypeptide is Proline--tRNA ligase (Mycobacterium tuberculosis (strain CDC 1551 / Oshkosh)).